A 205-amino-acid polypeptide reads, in one-letter code: ATP phosphoribosyltransferase (205 aa).

It belongs to the ATP phosphoribosyltransferase family. Short subfamily. Heteromultimer composed of HisG and HisZ subunits.

Its subcellular location is the cytoplasm. It carries out the reaction 1-(5-phospho-beta-D-ribosyl)-ATP + diphosphate = 5-phospho-alpha-D-ribose 1-diphosphate + ATP. It participates in amino-acid biosynthesis; L-histidine biosynthesis; L-histidine from 5-phospho-alpha-D-ribose 1-diphosphate: step 1/9. Functionally, catalyzes the condensation of ATP and 5-phosphoribose 1-diphosphate to form N'-(5'-phosphoribosyl)-ATP (PR-ATP). Has a crucial role in the pathway because the rate of histidine biosynthesis seems to be controlled primarily by regulation of HisG enzymatic activity. This chain is ATP phosphoribosyltransferase, found in Nitratiruptor sp. (strain SB155-2).